The chain runs to 161 residues: Ethylene-responsive transcription factor ERF070 (161 aa).

Residues 1–35 form a disordered region; that stretch reads MKRIIRISFTDAEATDSSSDEDTEERGGASQTRRR. A DNA-binding region (AP2/ERF) is located at residues 78–140; it reads KYRGVRQRPW…IGPHAPTNFG (63 aa).

It belongs to the AP2/ERF transcription factor family. ERF subfamily.

The protein localises to the nucleus. Functionally, probably acts as a transcriptional activator. Binds to the GCC-box pathogenesis-related promoter element. May be involved in the regulation of gene expression by stress factors and by components of stress signal transduction pathways. This is Ethylene-responsive transcription factor ERF070 (ERF070) from Arabidopsis thaliana (Mouse-ear cress).